A 227-amino-acid polypeptide reads, in one-letter code: UPF0758 protein CPE2144 (227 aa).

Residues Lys-105 to Leu-227 enclose the MPN domain. The Zn(2+) site is built by His-176, His-178, and Asp-189. Positions His-176–Asp-189 match the JAMM motif motif.

The protein belongs to the UPF0758 family.

This chain is UPF0758 protein CPE2144, found in Clostridium perfringens (strain 13 / Type A).